The chain runs to 111 residues: MEELQYNFKKRRKTHNGISRFQRSALPLTIVYTIWSTFGSPCSGDQRVTLSITSILRKVQDRRESEKKVKGKGREEYRRYYFFLLFYVSFPHIFLGLFFFIDKKILPFQSV.

A helical transmembrane segment spans residues 81–101; that stretch reads YFFLLFYVSFPHIFLGLFFFI.

Its subcellular location is the membrane. This is an uncharacterized protein from Schizosaccharomyces pombe (strain 972 / ATCC 24843) (Fission yeast).